We begin with the raw amino-acid sequence, 78 residues long: DNA-directed RNA polymerase subunit Rpo5 (78 aa).

The protein belongs to the archaeal Rpo5/eukaryotic RPB5 RNA polymerase subunit family. In terms of assembly, part of the RNA polymerase complex.

Its subcellular location is the cytoplasm. The enzyme catalyses RNA(n) + a ribonucleoside 5'-triphosphate = RNA(n+1) + diphosphate. DNA-dependent RNA polymerase (RNAP) catalyzes the transcription of DNA into RNA using the four ribonucleoside triphosphates as substrates. The sequence is that of DNA-directed RNA polymerase subunit Rpo5 from Methanococcus maripaludis (strain C6 / ATCC BAA-1332).